Reading from the N-terminus, the 270-residue chain is Tryptophan synthase alpha chain (270 aa).

Catalysis depends on proton acceptor residues Glu60 and Asp71.

It belongs to the TrpA family. Tetramer of two alpha and two beta chains.

The enzyme catalyses (1S,2R)-1-C-(indol-3-yl)glycerol 3-phosphate + L-serine = D-glyceraldehyde 3-phosphate + L-tryptophan + H2O. It participates in amino-acid biosynthesis; L-tryptophan biosynthesis; L-tryptophan from chorismate: step 5/5. The alpha subunit is responsible for the aldol cleavage of indoleglycerol phosphate to indole and glyceraldehyde 3-phosphate. This Deinococcus radiodurans (strain ATCC 13939 / DSM 20539 / JCM 16871 / CCUG 27074 / LMG 4051 / NBRC 15346 / NCIMB 9279 / VKM B-1422 / R1) protein is Tryptophan synthase alpha chain.